A 392-amino-acid polypeptide reads, in one-letter code: DNA replication and repair protein RecF (392 aa).

Position 30–37 (30–37 (GRNGFGKT)) interacts with ATP.

This sequence belongs to the RecF family.

The protein localises to the cytoplasm. Functionally, the RecF protein is involved in DNA metabolism; it is required for DNA replication and normal SOS inducibility. RecF binds preferentially to single-stranded, linear DNA. It also seems to bind ATP. In Corynebacterium aurimucosum (strain ATCC 700975 / DSM 44827 / CIP 107346 / CN-1) (Corynebacterium nigricans), this protein is DNA replication and repair protein RecF.